The chain runs to 918 residues: DNA repair and recombination protein RAD54B (918 aa).

Residues 1 to 11 show a composition bias toward polar residues; sequence MRRSAAPSQVL. Residues 1–29 are disordered; it reads MRRSAAPSQVLGNVAKKPRFIPPGKSNAL. Residues 320–487 enclose the Helicase ATP-binding domain; it reads GMRVSGRFGA…YALIEFVNPG (168 aa). An ATP-binding site is contributed by 333–340; sequence DEMGLGKT. Residues 438–441 carry the DEGH box motif; that stretch reads DEGH. The Helicase C-terminal domain occupies 653-817; that stretch reads VLVKLLAAIR…HIHFSVEELR (165 aa). A disordered region spans residues 842-873; the sequence is KDHQNPSSKKPSVSRCCQLRQDQGKHNSKKPL.

This sequence belongs to the SNF2/RAD54 helicase family.

Its subcellular location is the nucleus. Its function is as follows. Involved in DNA repair and mitotic recombination. This Gallus gallus (Chicken) protein is DNA repair and recombination protein RAD54B (RAD54B).